Consider the following 245-residue polypeptide: tRNA (guanine-N(1)-)-methyltransferase (245 aa).

Residues Gly-111 and 131-136 (MGDYVL) contribute to the S-adenosyl-L-methionine site.

The protein belongs to the RNA methyltransferase TrmD family. In terms of assembly, homodimer.

It is found in the cytoplasm. The enzyme catalyses guanosine(37) in tRNA + S-adenosyl-L-methionine = N(1)-methylguanosine(37) in tRNA + S-adenosyl-L-homocysteine + H(+). In terms of biological role, specifically methylates guanosine-37 in various tRNAs. The sequence is that of tRNA (guanine-N(1)-)-methyltransferase from Staphylococcus epidermidis (strain ATCC 12228 / FDA PCI 1200).